We begin with the raw amino-acid sequence, 344 residues long: Meiotically up-regulated gene 10 protein (344 aa).

The DH domain occupies 48 to 207 (EFNSILQEII…RELCSYIDQE (160 aa)).

The protein resides in the cytoplasm. The protein localises to the nucleus. Functionally, has a role in meiosis. The protein is Meiotically up-regulated gene 10 protein (mug10) of Schizosaccharomyces pombe (strain 972 / ATCC 24843) (Fission yeast).